Here is a 188-residue protein sequence, read N- to C-terminus: Dual specificity protein phosphatase 18 (188 aa).

The Tyrosine-protein phosphatase domain maps to 19–160 (GLSQITKSLY…LIHYEFQLFG (142 aa)). Cys104 functions as the Phosphocysteine intermediate in the catalytic mechanism.

Belongs to the protein-tyrosine phosphatase family. Non-receptor class dual specificity subfamily. As to expression, widely expressed with highest levels in liver, brain, ovary and testis.

It is found in the cytoplasm. The protein resides in the nucleus. The protein localises to the mitochondrion inner membrane. The enzyme catalyses O-phospho-L-tyrosyl-[protein] + H2O = L-tyrosyl-[protein] + phosphate. The catalysed reaction is O-phospho-L-seryl-[protein] + H2O = L-seryl-[protein] + phosphate. It catalyses the reaction O-phospho-L-threonyl-[protein] + H2O = L-threonyl-[protein] + phosphate. Its activity is regulated as follows. Activated by manganese ions, inhibited by iodoacetic acid. Its function is as follows. Can dephosphorylate single and diphosphorylated synthetic MAPK peptides, with preference for the phosphotyrosine and diphosphorylated forms over phosphothreonine. In vitro, dephosphorylates p-nitrophenyl phosphate (pNPP). The protein is Dual specificity protein phosphatase 18 (DUSP18) of Homo sapiens (Human).